The sequence spans 314 residues: Aromatic prenyltransferase (314 aa).

Belongs to the aromatic prenyltransferase family.

Functionally, prenyltransferase that attaches isoprenoid moieties to carbon atoms of aromatic substrates in an enzyme-catalyzed Friedel-Crafts reaction. The chain is Aromatic prenyltransferase from Arthroderma otae (strain ATCC MYA-4605 / CBS 113480) (Microsporum canis).